The sequence spans 147 residues: Vasopressin-neurophysin 2-copeptin (147 aa).

A disulfide bridge links Cys-1 with Cys-6. Glycine amide is present on Gly-9. 7 disulfides stabilise this stretch: Cys-22–Cys-66, Cys-25–Cys-39, Cys-33–Cys-56, Cys-40–Cys-46, Cys-73–Cys-85, Cys-79–Cys-97, and Cys-86–Cys-91. Residue Asn-114 is glycosylated (N-linked (GlcNAc...) asparagine).

Belongs to the vasopressin/oxytocin family. In terms of assembly, interacts with vasopressin receptors V1bR/AVPR1B (Ki=85 pM), V1aR/AVPR1A (Ki=0.6 nM) and V2R/AVPR2 (Ki=4.9 nM). Interacts with oxytocin receptor (OXTR) (Ki=110 nM).

The protein resides in the secreted. Functionally, neurophysin 2 specifically binds vasopressin. In terms of biological role, vasopressin has a direct antidiuretic action on the kidney, it also causes vasoconstriction of the peripheral vessels. Acts by binding to vasopressin receptors (V1bR/AVPR1B, V1aR/AVPR1A, and V2R/AVPR2). This Ovis aries (Sheep) protein is Vasopressin-neurophysin 2-copeptin (AVP).